A 45-amino-acid polypeptide reads, in one-letter code: AASGASIFSAKCAQCHLGGKNIINPTKTLSLADLQANGKDTVSAI.

3 residues coordinate heme c: C12, C15, and H16.

Belongs to the cytochrome c family. PetJ subfamily. As to quaternary structure, monomer. Post-translationally, binds 1 heme c group covalently per subunit.

Its subcellular location is the cellular thylakoid lumen. In terms of biological role, functions as an electron carrier between membrane-bound cytochrome b6-f and photosystem I in oxygenic photosynthesis. The polypeptide is Cytochrome c6 (petJ) (Prochlorothrix hollandica).